The chain runs to 66 residues: Large ribosomal subunit protein bL35 (66 aa).

Basic residues predominate over residues 1 to 26; that stretch reads MPKMKTHRGGAKRVKRTGSGKLKRSR. Disordered regions lie at residues 1-28 and 36-55; these read MPKM…SRAY and KSTK…KGDQ.

The protein belongs to the bacterial ribosomal protein bL35 family.

The polypeptide is Large ribosomal subunit protein bL35 (Macrococcus caseolyticus (strain JCSC5402) (Macrococcoides caseolyticum)).